The sequence spans 287 residues: Protease HtpX (287 aa).

The next 2 membrane-spanning stretches (helical) occupy residues 4 to 24 (IFLL…VMSI) and 33 to 53 (GGLL…SLAI). His-139 contributes to the Zn(2+) binding site. Glu-140 is a catalytic residue. His-143 lines the Zn(2+) pocket. The next 2 membrane-spanning stretches (helical) occupy residues 154 to 174 (LIQG…AGII) and 195 to 215 (AVVF…VAYF). Glu-220 lines the Zn(2+) pocket.

This sequence belongs to the peptidase M48B family. Zn(2+) is required as a cofactor.

It is found in the cell inner membrane. This is Protease HtpX from Shewanella sp. (strain MR-4).